A 648-amino-acid polypeptide reads, in one-letter code: Threonine--tRNA ligase (648 aa).

Positions Met-1 to Lys-61 constitute a TGS domain. Residues Asp-243–Pro-542 are catalytic. Cys-338, His-389, and His-519 together coordinate Zn(2+).

It belongs to the class-II aminoacyl-tRNA synthetase family. Homodimer. Zn(2+) serves as cofactor.

Its subcellular location is the cytoplasm. The enzyme catalyses tRNA(Thr) + L-threonine + ATP = L-threonyl-tRNA(Thr) + AMP + diphosphate + H(+). Its function is as follows. Catalyzes the attachment of threonine to tRNA(Thr) in a two-step reaction: L-threonine is first activated by ATP to form Thr-AMP and then transferred to the acceptor end of tRNA(Thr). Also edits incorrectly charged L-seryl-tRNA(Thr). The chain is Threonine--tRNA ligase from Azobacteroides pseudotrichonymphae genomovar. CFP2.